The sequence spans 731 residues: DNA ligase (731 aa).

Residues 47 to 51 (DAEYD), 96 to 97 (SI), and glutamate 133 each bind NAD(+). Lysine 135 functions as the N6-AMP-lysine intermediate in the catalytic mechanism. Residues arginine 156, glutamate 192, lysine 313, and lysine 337 each contribute to the NAD(+) site. Zn(2+) is bound by residues cysteine 462, cysteine 465, cysteine 480, and cysteine 486. One can recognise a BRCT domain in the interval 645–731 (AATLPLAGMT…RGTPPNAGGA (87 aa)).

Belongs to the NAD-dependent DNA ligase family. LigA subfamily. Mg(2+) serves as cofactor. Requires Mn(2+) as cofactor.

The enzyme catalyses NAD(+) + (deoxyribonucleotide)n-3'-hydroxyl + 5'-phospho-(deoxyribonucleotide)m = (deoxyribonucleotide)n+m + AMP + beta-nicotinamide D-nucleotide.. Functionally, DNA ligase that catalyzes the formation of phosphodiester linkages between 5'-phosphoryl and 3'-hydroxyl groups in double-stranded DNA using NAD as a coenzyme and as the energy source for the reaction. It is essential for DNA replication and repair of damaged DNA. This is DNA ligase from Acidovorax sp. (strain JS42).